The sequence spans 87 residues: UPF0147 protein AF_2370.1 (87 aa).

The protein belongs to the UPF0147 family.

The chain is UPF0147 protein AF_2370.1 from Archaeoglobus fulgidus (strain ATCC 49558 / DSM 4304 / JCM 9628 / NBRC 100126 / VC-16).